Here is a 331-residue protein sequence, read N- to C-terminus: Osmotic avoidance abnormal protein 8 (331 aa).

The signal sequence occupies residues 1–21 (MPAKMLKWLLIHIFLIHSIFC).

Expressed in the hypodermal syncitium but not in hypodermal seam cells.

Its subcellular location is the secreted. Negative regulator of the osmotic stress response. Acts via the transmembrane protein ptr-23. This is Osmotic avoidance abnormal protein 8 (osm-8) from Caenorhabditis elegans.